A 113-amino-acid polypeptide reads, in one-letter code: MHEMALCEGIVEIVEAEARKGAFSKVKTVWLEIGALSHVAPEALRFCFEAVTAHTIARGAALEIIEQKGSAWCLGCSRSVEISRRYDACSECGSHQLQVTGGEDMRVKELEVE.

H2 contributes to the Ni(2+) binding site. Zn(2+) contacts are provided by C73, C76, C89, and C92.

It belongs to the HypA/HybF family.

In terms of biological role, involved in the maturation of [NiFe] hydrogenases. Required for nickel insertion into the metal center of the hydrogenase. The chain is Hydrogenase maturation factor HypA from Bradyrhizobium sp. (strain ORS 278).